Here is a 312-residue protein sequence, read N- to C-terminus: MTLWRPTPSDIWQGRDDRAEASNALRIFQTLRQSEHFIPANSGIALMGFASDEGVKRNHGRTGAAQAPDVLRKALANMASHHGHDRLVDMGTFTVEADQLEAAQHALSDGVQACQQAGMRTLVFGGGHETAWAHGRGVLEAFPDDRVVIINLDAHLDLRNAERATSGTPFRQLAQYCAARQREFQYACFGVSRAGNTQALWDEAGRLNVTLVEDLHFRRDALSTLDAVLAQADRVYLTLDLDVLPAGEMPAVSAPAALGIPALDLLPVIEQICRSGKLQAADLVEFNPLYDREGQGARLAARLAWQIAHWWA.

Mn(2+)-binding residues include His128, Asp153, His155, Asp157, Asp240, and Asp242.

The protein belongs to the arginase family. Mn(2+) serves as cofactor.

The catalysed reaction is N-formimidoyl-L-glutamate + H2O = formamide + L-glutamate. The protein operates within amino-acid degradation; L-histidine degradation into L-glutamate; L-glutamate from N-formimidoyl-L-glutamate (hydrolase route): step 1/1. In terms of biological role, catalyzes the conversion of N-formimidoyl-L-glutamate to L-glutamate and formamide. This chain is Formimidoylglutamase, found in Enterobacter sp. (strain 638).